Consider the following 336-residue polypeptide: MKDRYILAFETSCDETSVAVLKNDDELLSNVIASQIESHKRFGGVVPEVASRHHVEVITACIEEALAEAGITEEDVTAVAATYGPGLVGALLVGLSAAKAFAWAHGLPLIPVNHMAGHLMAAQSVEPLEFPLLALLVSGGHTELVYVSEAGDYKIVGETRDDAVGEAYDKVGRVMGLTYPAGREIDELAHQGQDIYDFPRAMIKEDNLEFSFSGLKSAFINLHHNAEQKGESLSTEDLCASFQAAVMDILMAKTKKALEKYPVKTLVVAGGVAANKGLRERLAAEITDVKVIIPPLRLCGDNAGMIAYASVSEWNKENFAGWDLNAKPSLAFDTME.

The Fe cation site is built by H114 and H118. Residues 136 to 140 (LVSGG), D169, G182, D186, and N275 contribute to the substrate site. D301 serves as a coordination point for Fe cation.

This sequence belongs to the KAE1 / TsaD family. Fe(2+) is required as a cofactor.

The protein resides in the cytoplasm. It catalyses the reaction L-threonylcarbamoyladenylate + adenosine(37) in tRNA = N(6)-L-threonylcarbamoyladenosine(37) in tRNA + AMP + H(+). Its function is as follows. Required for the formation of a threonylcarbamoyl group on adenosine at position 37 (t(6)A37) in tRNAs that read codons beginning with adenine. Is involved in the transfer of the threonylcarbamoyl moiety of threonylcarbamoyl-AMP (TC-AMP) to the N6 group of A37, together with TsaE and TsaB. TsaD likely plays a direct catalytic role in this reaction. This chain is tRNA N6-adenosine threonylcarbamoyltransferase, found in Streptococcus pneumoniae (strain ATCC 700669 / Spain 23F-1).